The primary structure comprises 642 residues: uncharacterized protein (642 aa).

At 1–15 (MVHITLGQAIWVSVK) the chain is on the cytoplasmic side. A helical transmembrane segment spans residues 16–36 (PIIKIYLIIGVGFLMAKMGIL). Over 37–42 (TVEATR) the chain is Extracellular. Residues 43–63 (IISDIVLTVLLPSLSFNKIVA) form a helical membrane-spanning segment. The Cytoplasmic segment spans residues 64 to 73 (NIEDKDIKSV). The helical transmembrane segment at 74-94 (GIICLSALLIFGSGFFFAYVV) threads the bilayer. At 95–104 (RLFLPVPKQW) the chain is on the extracellular side. A helical transmembrane segment spans residues 105–125 (YGGILAGGMFPNISDLPIAYL). The Cytoplasmic portion of the chain corresponds to 126 to 142 (QSMDQGLVFSEEEGNKG). A helical membrane pass occupies residues 143-163 (VANVIIFLTMFLICIFNLGGF). Residues 164 to 460 (RLIESDFEYN…FLKNCLRPCS (297 aa)) lie on the Extracellular side of the membrane. Disordered regions lie at residues 183–206 (ETTKTQPAVSANTTNTDTSERFFS) and 227–324 (GTKG…SQPR). 2 stretches are compositionally biased toward polar residues: residues 240 to 260 (RRSTNSIAPLSLPDTSSNSKI) and 272 to 312 (IACT…SSID). The helical transmembrane segment at 461–481 (MAVIIALTVAFIPWVKALFVT) threads the bilayer. The Cytoplasmic portion of the chain corresponds to 482 to 499 (TANTPHISQAPDNAPPLS). The chain crosses the membrane as a helical span at residues 500–520 (FFMDFTGYVGAACVPFGLILL). Topologically, residues 521–538 (GATLGRLKIGNLYPGFWK) are extracellular. A helical transmembrane segment spans residues 539–559 (AAVTLVILRQCVMPIFGVLWC). The Cytoplasmic portion of the chain corresponds to 560–574 (DRLVKAGWVNWQDDR). Residues 575–595 (MLLFVIAISWNLPTMTTLIYF) form a helical membrane-spanning segment. The Extracellular portion of the chain corresponds to 596–614 (TASFTPPETTAPIQMECVS). Residues 615 to 635 (FFLMLQYPLMVVSLPFLVSYF) form a helical membrane-spanning segment. Over 636 to 642 (LKVQMNL) the chain is Cytoplasmic.

Belongs to the auxin efflux carrier (TC 2.A.69) family.

It is found in the membrane. This is an uncharacterized protein from Saccharomyces cerevisiae (strain ATCC 204508 / S288c) (Baker's yeast).